A 92-amino-acid chain; its full sequence is Progonadoliberin-1 (92 aa).

Positions 1–23 (MKPIQKLLAGLILLTWCVEGCSS) are cleaved as a signal peptide. Gln-24 carries the post-translational modification Pyrrolidone carboxylic acid. Gly-33 bears the Glycine amide mark.

Belongs to the GnRH family. The precursor is cleaved by ACE, which removes the Gly-Lys-Arg peptide at the C-terminus, leading to mature hormone. The mature form of Gonadoliberin-1 is also cleaved and degraded by ACE.

Its subcellular location is the secreted. In terms of biological role, stimulates the secretion of gonadotropins; it stimulates the secretion of both luteinizing and follicle-stimulating hormones. This Homo sapiens (Human) protein is Progonadoliberin-1 (GNRH1).